We begin with the raw amino-acid sequence, 425 residues long: Multifunctional CCA protein (425 aa).

ATP is bound by residues glycine 8 and arginine 11. 2 residues coordinate CTP: glycine 8 and arginine 11. Positions 21 and 23 each coordinate Mg(2+). 3 residues coordinate ATP: arginine 91, arginine 141, and arginine 144. CTP is bound by residues arginine 91, arginine 141, and arginine 144. In terms of domain architecture, HD spans 230 to 331; that stretch reads TGVHLMMVLD…VRLLERCDAI (102 aa).

Belongs to the tRNA nucleotidyltransferase/poly(A) polymerase family. Bacterial CCA-adding enzyme type 1 subfamily. Monomer. Can also form homodimers and oligomers. The cofactor is Mg(2+). Ni(2+) serves as cofactor.

It carries out the reaction a tRNA precursor + 2 CTP + ATP = a tRNA with a 3' CCA end + 3 diphosphate. The enzyme catalyses a tRNA with a 3' CCA end + 2 CTP + ATP = a tRNA with a 3' CCACCA end + 3 diphosphate. Catalyzes the addition and repair of the essential 3'-terminal CCA sequence in tRNAs without using a nucleic acid template. Adds these three nucleotides in the order of C, C, and A to the tRNA nucleotide-73, using CTP and ATP as substrates and producing inorganic pyrophosphate. tRNA 3'-terminal CCA addition is required both for tRNA processing and repair. Also involved in tRNA surveillance by mediating tandem CCA addition to generate a CCACCA at the 3' terminus of unstable tRNAs. While stable tRNAs receive only 3'-terminal CCA, unstable tRNAs are marked with CCACCA and rapidly degraded. This chain is Multifunctional CCA protein, found in Acidovorax sp. (strain JS42).